Consider the following 374-residue polypeptide: O-methyltransferase 16 (374 aa).

Residues Ser195, Gly219, Asp242, Asp262, and Lys276 each contribute to the S-adenosyl-L-homocysteine site. Residue Asp242 participates in S-adenosyl-L-methionine binding. The Proton acceptor role is filled by His280.

Belongs to the class I-like SAM-binding methyltransferase superfamily. Cation-independent O-methyltransferase family. In terms of assembly, homodimer. As to expression, expressed mainly in vasculature and cortex tissues at low levels.

It carries out the reaction dopamine + S-adenosyl-L-methionine = 4-methoxytyramine + S-adenosyl-L-homocysteine + H(+). The protein operates within aromatic compound metabolism. Its pathway is alkaloid biosynthesis. Functionally, O-methyltransferase participating in the biosynthesis of natural products derived from phenylethylamine, including mescaline, a natural hallucinogen potentially used in psychotherapeutic treatments. Catalyzes the O-methylation of dopamine to produce 4-methoxytyramine. The protein is O-methyltransferase 16 of Lophophora williamsii (Peyote).